The following is a 609-amino-acid chain: Pentatricopeptide repeat-containing protein At1g03540 (609 aa).

PPR repeat units follow at residues 25-59 (SAPTKQSRILELCKLGQLTEAIRILNSTHSSEIPA), 60-94 (TPKLYASLLQTCNKVFSFIHGIQFHAHVVKSGLET), 95-126 (DRNVGNSLLSLYFKLGPGMRETRRVFDGRFVK), 127-161 (DAISWTSMMSGYVTGKEHVKALEVFVEMVSFGLDA), 162-196 (NEFTLSSAVKACSELGEVRLGRCFHGVVITHGFEW), 197-227 (NHFISSTLAYLYGVNREPVDARRVFDEMPEP), 228-263 (DVICWTAVLSAFSKNDLYEEALGLFYAMHRGKGLVP), 264-298 (DGSTFGTVLTACGNLRRLKQGKEIHGKLITNGIGS), 299-329 (NVVVESSLLDMYGKCGSVREARQVFNGMSKK), 330-364 (NSVSWSALLGGYCQNGEHEKAIEIFREMEEKDLYC), 396-426 (NVIVESALIDLYGKSGCIDSASRVYSKMSIR), 427-461 (NMITWNAMLSALAQNGRGEEAVSFFNDMVKKGIKP), 462-497 (DYISFIAILTACGHTGMVDEGRNYFVLMAKSYGIKP), and 498-532 (GTEHYSCMIDLLGRAGLFEEAENLLERAECRNDAS). A type E motif region spans residues 533–609 (LWGVLLGPCA…TVGQSWIDAH (77 aa)).

It belongs to the PPR family. PCMP-E subfamily.

The protein is Pentatricopeptide repeat-containing protein At1g03540 (PCMP-E4) of Arabidopsis thaliana (Mouse-ear cress).